A 350-amino-acid polypeptide reads, in one-letter code: Holliday junction branch migration complex subunit RuvB (350 aa).

Residues 4–184 are large ATPase domain (RuvB-L); the sequence is TDRLIAAQPQ…FGIVQRLEFY (181 aa). ATP contacts are provided by residues Ile-23, Arg-24, Gly-65, Lys-68, Thr-69, Thr-70, 131 to 133, Arg-174, Tyr-184, and Arg-221; that span reads EDY. Thr-69 lines the Mg(2+) pocket. Positions 185-255 are small ATPAse domain (RuvB-S); sequence AVEELTEIVV…IADQALNMLH (71 aa). Positions 258 to 350 are head domain (RuvB-H); it reads RHGLDHMDRR…PLTPPGESDA (93 aa). Residues Arg-294, Arg-313, and Arg-318 each coordinate DNA.

It belongs to the RuvB family. Homohexamer. Forms an RuvA(8)-RuvB(12)-Holliday junction (HJ) complex. HJ DNA is sandwiched between 2 RuvA tetramers; dsDNA enters through RuvA and exits via RuvB. An RuvB hexamer assembles on each DNA strand where it exits the tetramer. Each RuvB hexamer is contacted by two RuvA subunits (via domain III) on 2 adjacent RuvB subunits; this complex drives branch migration. In the full resolvosome a probable DNA-RuvA(4)-RuvB(12)-RuvC(2) complex forms which resolves the HJ.

It is found in the cytoplasm. It carries out the reaction ATP + H2O = ADP + phosphate + H(+). The RuvA-RuvB-RuvC complex processes Holliday junction (HJ) DNA during genetic recombination and DNA repair, while the RuvA-RuvB complex plays an important role in the rescue of blocked DNA replication forks via replication fork reversal (RFR). RuvA specifically binds to HJ cruciform DNA, conferring on it an open structure. The RuvB hexamer acts as an ATP-dependent pump, pulling dsDNA into and through the RuvAB complex. RuvB forms 2 homohexamers on either side of HJ DNA bound by 1 or 2 RuvA tetramers; 4 subunits per hexamer contact DNA at a time. Coordinated motions by a converter formed by DNA-disengaged RuvB subunits stimulates ATP hydrolysis and nucleotide exchange. Immobilization of the converter enables RuvB to convert the ATP-contained energy into a lever motion, pulling 2 nucleotides of DNA out of the RuvA tetramer per ATP hydrolyzed, thus driving DNA branch migration. The RuvB motors rotate together with the DNA substrate, which together with the progressing nucleotide cycle form the mechanistic basis for DNA recombination by continuous HJ branch migration. Branch migration allows RuvC to scan DNA until it finds its consensus sequence, where it cleaves and resolves cruciform DNA. This Chromohalobacter salexigens (strain ATCC BAA-138 / DSM 3043 / CIP 106854 / NCIMB 13768 / 1H11) protein is Holliday junction branch migration complex subunit RuvB.